The following is a 328-amino-acid chain: DNA-directed RNA polymerase subunit alpha (328 aa).

The tract at residues 1–231 (MQTNLLKPKA…EQLAVFAQLE (231 aa)) is alpha N-terminal domain (alpha-NTD). An alpha C-terminal domain (alpha-CTD) region spans residues 248 to 328 (FDPILLRPVD…NWPPQGLDKR (81 aa)).

It belongs to the RNA polymerase alpha chain family. Homodimer. The RNAP catalytic core consists of 2 alpha, 1 beta, 1 beta' and 1 omega subunit. When a sigma factor is associated with the core the holoenzyme is formed, which can initiate transcription.

It catalyses the reaction RNA(n) + a ribonucleoside 5'-triphosphate = RNA(n+1) + diphosphate. DNA-dependent RNA polymerase catalyzes the transcription of DNA into RNA using the four ribonucleoside triphosphates as substrates. This Leptothrix cholodnii (strain ATCC 51168 / LMG 8142 / SP-6) (Leptothrix discophora (strain SP-6)) protein is DNA-directed RNA polymerase subunit alpha.